A 158-amino-acid polypeptide reads, in one-letter code: Ribonuclease H (158 aa).

The region spanning 3–144 (GLKQLLIFTD…CDTLAREAAE (142 aa)) is the RNase H type-1 domain. Mg(2+) is bound by residues D12, E50, D72, and D136.

It belongs to the RNase H family. Monomer. The cofactor is Mg(2+).

Its subcellular location is the cytoplasm. It catalyses the reaction Endonucleolytic cleavage to 5'-phosphomonoester.. Functionally, endonuclease that specifically degrades the RNA of RNA-DNA hybrids. The polypeptide is Ribonuclease H (Shewanella loihica (strain ATCC BAA-1088 / PV-4)).